The chain runs to 361 residues: Phosphoserine aminotransferase (361 aa).

R42 is an L-glutamate binding site. Pyridoxal 5'-phosphate contacts are provided by residues 76 to 77 (AR), W102, T153, D173, and Q196. K197 is subject to N6-(pyridoxal phosphate)lysine. 238 to 239 (NT) provides a ligand contact to pyridoxal 5'-phosphate.

This sequence belongs to the class-V pyridoxal-phosphate-dependent aminotransferase family. SerC subfamily. As to quaternary structure, homodimer. The cofactor is pyridoxal 5'-phosphate.

The protein resides in the cytoplasm. The catalysed reaction is O-phospho-L-serine + 2-oxoglutarate = 3-phosphooxypyruvate + L-glutamate. The enzyme catalyses 4-(phosphooxy)-L-threonine + 2-oxoglutarate = (R)-3-hydroxy-2-oxo-4-phosphooxybutanoate + L-glutamate. It participates in amino-acid biosynthesis; L-serine biosynthesis; L-serine from 3-phospho-D-glycerate: step 2/3. The protein operates within cofactor biosynthesis; pyridoxine 5'-phosphate biosynthesis; pyridoxine 5'-phosphate from D-erythrose 4-phosphate: step 3/5. Its function is as follows. Catalyzes the reversible conversion of 3-phosphohydroxypyruvate to phosphoserine and of 3-hydroxy-2-oxo-4-phosphonooxybutanoate to phosphohydroxythreonine. This chain is Phosphoserine aminotransferase, found in Yersinia pseudotuberculosis serotype IB (strain PB1/+).